Consider the following 137-residue polypeptide: Holo-[acyl-carrier-protein] synthase (137 aa).

Aspartate 8 and glutamate 58 together coordinate Mg(2+).

The protein belongs to the P-Pant transferase superfamily. AcpS family. Mg(2+) serves as cofactor.

It is found in the cytoplasm. The enzyme catalyses apo-[ACP] + CoA = holo-[ACP] + adenosine 3',5'-bisphosphate + H(+). In terms of biological role, transfers the 4'-phosphopantetheine moiety from coenzyme A to a Ser of acyl-carrier-protein. In Lactobacillus delbrueckii subsp. bulgaricus (strain ATCC 11842 / DSM 20081 / BCRC 10696 / JCM 1002 / NBRC 13953 / NCIMB 11778 / NCTC 12712 / WDCM 00102 / Lb 14), this protein is Holo-[acyl-carrier-protein] synthase.